The sequence spans 557 residues: TBCC domain-containing protein 1 (557 aa).

Positions 290-435 (TTKRAKIACN…LEDHMARTGL (146 aa)) constitute a C-CAP/cofactor C-like domain.

This sequence belongs to the TBCC family.

The protein resides in the cytoplasm. It is found in the cytoskeleton. The protein localises to the microtubule organizing center. It localises to the centrosome. Its subcellular location is the spindle pole. Functionally, plays a role in the regulation of centrosome and Golgi apparatus positioning, with consequences on cell shape and cell migration. This Bos taurus (Bovine) protein is TBCC domain-containing protein 1 (TBCCD1).